The chain runs to 396 residues: Elongation factor Tu 1 (396 aa).

In terms of domain architecture, tr-type G spans 10-206 (KPHVNVGTIG…ALDTYIPTPE (197 aa)). The tract at residues 19–26 (GHVDHGKT) is G1. Residue 19–26 (GHVDHGKT) coordinates GTP. A Mg(2+)-binding site is contributed by Thr26. The segment at 60–64 (GITIN) is G2. The segment at 81–84 (DCPG) is G3. GTP is bound by residues 81 to 85 (DCPGH) and 136 to 139 (NKAD). The G4 stretch occupies residues 136–139 (NKAD). The segment at 174-176 (SAK) is G5.

The protein belongs to the TRAFAC class translation factor GTPase superfamily. Classic translation factor GTPase family. EF-Tu/EF-1A subfamily. Monomer.

It localises to the cytoplasm. The enzyme catalyses GTP + H2O = GDP + phosphate + H(+). Functionally, GTP hydrolase that promotes the GTP-dependent binding of aminoacyl-tRNA to the A-site of ribosomes during protein biosynthesis. The sequence is that of Elongation factor Tu 1 from Methylobacillus flagellatus (strain ATCC 51484 / DSM 6875 / VKM B-1610 / KT).